Reading from the N-terminus, the 99-residue chain is uncharacterized protein (99 aa).

A signal peptide spans 1–17; it reads MMMNAFFPAMALIVLVG. Cys-18 is lipidated: N-palmitoyl cysteine. The S-diacylglycerol cysteine moiety is linked to residue Cys-18.

Its subcellular location is the cell membrane. This is an uncharacterized protein from Escherichia coli (strain UTI89 / UPEC).